The primary structure comprises 394 residues: Beta-ketothiolase BktB (394 aa).

The Acyl-thioester intermediate role is filled by Cys90. Catalysis depends on proton acceptor residues His350 and Cys380.

Belongs to the thiolase-like superfamily. Thiolase family.

The catalysed reaction is an acyl-CoA + acetyl-CoA = a 3-oxoacyl-CoA + CoA. It catalyses the reaction 2 acetyl-CoA = acetoacetyl-CoA + CoA. Its function is as follows. Required for efficient production of poly(beta-hydroxybutyrate-co-beta-hydroxyvalerate) (PHBV). Catalyzes the condensation of acetyl-CoA and propionyl-CoA to form beta-ketovaleryl-CoA, and the condensation of two acetyl-CoA molecules to form acetoacetyl-CoA. This chain is Beta-ketothiolase BktB (bktB), found in Cupriavidus necator (strain ATCC 17699 / DSM 428 / KCTC 22496 / NCIMB 10442 / H16 / Stanier 337) (Ralstonia eutropha).